The chain runs to 213 residues: MRACNTLLPTAIVLTSCDALSAHRAQIMNVATSDLISPIESTVQDDNYDRQLRGFYATENTDPVNNQDTAHEDGEERVNVATVLGKGDEAWDDALMRLAYQHWFDGGKTSDGMRLIMDLPAKGEALRHPNWGKYIKYLEFVKEKKKEAADAAAVAALKRRRTYRGWYVDGKTEKDVRKIFGLPATGKAKNHPNWADFQEYLNVVREYSKVVFK.

The N-terminal stretch at 1 to 19 (MRACNTLLPTAIVLTSCDA) is a signal peptide. A RxLR-dEER motif is present at residues 50–77 (RQLRGFYATENTDPVNNQDTAHEDGEER).

Belongs to the RxLR effector family.

It localises to the secreted. The protein resides in the host nucleus. In terms of biological role, effector that enhances P.infestans colonization of Nicotiana benthamiana leaves. The protein is RxLR effector protein PexRD1 of Phytophthora infestans (strain T30-4) (Potato late blight agent).